The following is a 208-amino-acid chain: Protein-L-isoaspartate O-methyltransferase (208 aa).

Residue serine 59 is part of the active site.

It belongs to the methyltransferase superfamily. L-isoaspartyl/D-aspartyl protein methyltransferase family.

Its subcellular location is the cytoplasm. The catalysed reaction is [protein]-L-isoaspartate + S-adenosyl-L-methionine = [protein]-L-isoaspartate alpha-methyl ester + S-adenosyl-L-homocysteine. Catalyzes the methyl esterification of L-isoaspartyl residues in peptides and proteins that result from spontaneous decomposition of normal L-aspartyl and L-asparaginyl residues. It plays a role in the repair and/or degradation of damaged proteins. This chain is Protein-L-isoaspartate O-methyltransferase, found in Yersinia pseudotuberculosis serotype O:1b (strain IP 31758).